A 152-amino-acid chain; its full sequence is Endoribonuclease YbeY (152 aa).

Zn(2+)-binding residues include histidine 113, histidine 117, and histidine 123.

Belongs to the endoribonuclease YbeY family. Zn(2+) serves as cofactor.

Its subcellular location is the cytoplasm. Functionally, single strand-specific metallo-endoribonuclease involved in late-stage 70S ribosome quality control and in maturation of the 3' terminus of the 16S rRNA. The chain is Endoribonuclease YbeY from Acidovorax ebreus (strain TPSY) (Diaphorobacter sp. (strain TPSY)).